We begin with the raw amino-acid sequence, 474 residues long: UDP-N-acetylmuramoyl-L-alanyl-D-glutamate--2,6-diaminopimelate ligase (474 aa).

Ser-21 contributes to the UDP-N-acetyl-alpha-D-muramoyl-L-alanyl-D-glutamate binding site. Residue 93–99 participates in ATP binding; the sequence is GTNGKSS. Residues 139 to 140, Ser-166, Gln-172, and Arg-174 contribute to the UDP-N-acetyl-alpha-D-muramoyl-L-alanyl-D-glutamate site; that span reads TT. Lys-206 is subject to N6-carboxylysine. Meso-2,6-diaminopimelate is bound by residues Arg-367, 391–394, Gly-441, and Glu-445; that span reads DNPR. The Meso-diaminopimelate recognition motif signature appears at 391–394; sequence DNPR.

It belongs to the MurCDEF family. MurE subfamily. It depends on Mg(2+) as a cofactor. Carboxylation is probably crucial for Mg(2+) binding and, consequently, for the gamma-phosphate positioning of ATP.

The protein resides in the cytoplasm. The enzyme catalyses UDP-N-acetyl-alpha-D-muramoyl-L-alanyl-D-glutamate + meso-2,6-diaminopimelate + ATP = UDP-N-acetyl-alpha-D-muramoyl-L-alanyl-gamma-D-glutamyl-meso-2,6-diaminopimelate + ADP + phosphate + H(+). It participates in cell wall biogenesis; peptidoglycan biosynthesis. In terms of biological role, catalyzes the addition of meso-diaminopimelic acid to the nucleotide precursor UDP-N-acetylmuramoyl-L-alanyl-D-glutamate (UMAG) in the biosynthesis of bacterial cell-wall peptidoglycan. This chain is UDP-N-acetylmuramoyl-L-alanyl-D-glutamate--2,6-diaminopimelate ligase, found in Rickettsia bellii (strain RML369-C).